Here is a 300-residue protein sequence, read N- to C-terminus: Junctional adhesion molecule A (300 aa).

Residues 1 to 26 (MGTEGKAGRKLLFLFTSMILGSLVQG) form the signal peptide. Residues 27–238 (KGSVYTAQSD…MDAVELNVGG (212 aa)) are Extracellular-facing. Ig-like V-type domains are found at residues 28–122 (GSVY…GEVS) and 134–230 (PTIS…AHMD). Asparagine 42 carries N-linked (GlcNAc...) asparagine glycosylation. 2 cysteine pairs are disulfide-bonded: cysteine 49–cysteine 108 and cysteine 152–cysteine 212. Asparagine 185 carries an N-linked (GlcNAc...) asparagine glycan. Residues 239–259 (IVAAVLVTLILLGLLIFGVWF) form a helical membrane-spanning segment. At 260 to 299 (AYSRGYFERTKKGTAPGKKVIYSQPSTRSEGEFKQTSSFL) the chain is on the cytoplasmic side. 3 positions are modified to phosphoserine: serine 282, serine 285, and serine 288.

The protein belongs to the immunoglobulin superfamily. In terms of assembly, interacts with the ninth PDZ domain of MPDZ. Interacts with the first PDZ domain of PARD3. The association between PARD3 and PARD6B probably disrupts this interaction. Interacts with ITGAL (via I-domain). Interacts with CD151.

Its subcellular location is the cell junction. It localises to the tight junction. The protein localises to the cell membrane. Seems to play a role in epithelial tight junction formation. Appears early in primordial forms of cell junctions and recruits PARD3. The association of the PARD6-PARD3 complex may prevent the interaction of PARD3 with JAM1, thereby preventing tight junction assembly. Plays a role in regulating monocyte transmigration involved in integrity of epithelial barrier. Ligand for integrin alpha-L/beta-2 involved in memory T-cell and neutrophil transmigration. Involved in platelet activation. The chain is Junctional adhesion molecule A (F11r) from Mus musculus (Mouse).